Here is a 701-residue protein sequence, read N- to C-terminus: DNA ligase (701 aa).

NAD(+) contacts are provided by residues D43–D47, S92–L93, and E126. The active-site N6-AMP-lysine intermediate is K128. The NAD(+) site is built by R149, E186, K302, and K326. 4 residues coordinate Zn(2+): C420, C423, C444, and C450. A BRCT domain is found at A623–A701.

The protein belongs to the NAD-dependent DNA ligase family. LigA subfamily. Mg(2+) is required as a cofactor. Mn(2+) serves as cofactor.

It catalyses the reaction NAD(+) + (deoxyribonucleotide)n-3'-hydroxyl + 5'-phospho-(deoxyribonucleotide)m = (deoxyribonucleotide)n+m + AMP + beta-nicotinamide D-nucleotide.. Functionally, DNA ligase that catalyzes the formation of phosphodiester linkages between 5'-phosphoryl and 3'-hydroxyl groups in double-stranded DNA using NAD as a coenzyme and as the energy source for the reaction. It is essential for DNA replication and repair of damaged DNA. This Maricaulis maris (strain MCS10) (Caulobacter maris) protein is DNA ligase.